We begin with the raw amino-acid sequence, 480 residues long: Acetyl-coenzyme A carboxylase carboxyl transferase subunit beta, chloroplastic (480 aa).

Positions 212-480 (LWVQCENCYG…FPLNQINKYK (269 aa)) constitute a CoA carboxyltransferase N-terminal domain. Residues Cys-216, Cys-219, Cys-235, and Cys-238 each coordinate Zn(2+). The C4-type zinc finger occupies 216–238 (CENCYGLNYQKFFRSKMNICERC).

Belongs to the AccD/PCCB family. In terms of assembly, acetyl-CoA carboxylase is a heterohexamer composed of biotin carboxyl carrier protein, biotin carboxylase and 2 subunits each of ACCase subunit alpha and ACCase plastid-coded subunit beta (accD). Zn(2+) is required as a cofactor.

The protein resides in the plastid. The protein localises to the chloroplast stroma. The enzyme catalyses N(6)-carboxybiotinyl-L-lysyl-[protein] + acetyl-CoA = N(6)-biotinyl-L-lysyl-[protein] + malonyl-CoA. The protein operates within lipid metabolism; malonyl-CoA biosynthesis; malonyl-CoA from acetyl-CoA: step 1/1. Functionally, component of the acetyl coenzyme A carboxylase (ACC) complex. Biotin carboxylase (BC) catalyzes the carboxylation of biotin on its carrier protein (BCCP) and then the CO(2) group is transferred by the transcarboxylase to acetyl-CoA to form malonyl-CoA. The chain is Acetyl-coenzyme A carboxylase carboxyl transferase subunit beta, chloroplastic from Illicium oligandrum (Star anise).